Reading from the N-terminus, the 96-residue chain is uncharacterized protein (96 aa).

3 helical membrane-spanning segments follow: residues 14-34 (FIEG…KYWA), 38-58 (LAVT…LLVL), and 67-87 (WPLK…GNFL).

The protein resides in the cell membrane. This is an uncharacterized protein from Bacillus subtilis (strain 168).